Consider the following 73-residue polypeptide: MKLCVAFLLVLVILPSVIGGKPSERTLSGATRRGDRRMCLSLGQRCERHSNCCGYLCCFYDKCVVTAIGCGHY.

Positions 1–20 (MKLCVAFLLVLVILPSVIGG) are cleaved as a signal peptide. Residues 21–35 (KPSERTLSGATRRGD) constitute a propeptide that is removed on maturation. 4 disulfide bridges follow: C39-C53, C46-C58, C52-C63, and C57-C70.

It belongs to the conotoxin I1 superfamily. In terms of tissue distribution, expressed by the venom duct.

Its subcellular location is the secreted. The protein is Conotoxin Bt11.1 of Conus betulinus (Beech cone).